The sequence spans 276 residues: Large ribosomal subunit protein uL2c (276 aa).

Residues 221 to 276 (RGSVMNPVDHPHGGGEGRAPIGRSRPVTPWGKPALGQKTRKPKKQSNKLILRKRKK) are disordered. Positions 258–276 (KTRKPKKQSNKLILRKRKK) are enriched in basic residues.

This sequence belongs to the universal ribosomal protein uL2 family. In terms of assembly, part of the 50S ribosomal subunit.

It is found in the plastid. The protein localises to the chloroplast. The polypeptide is Large ribosomal subunit protein uL2c (rpl2) (Stigeoclonium helveticum (Green alga)).